Consider the following 326-residue polypeptide: Biotin synthase (326 aa).

The Radical SAM core domain maps to 48 to 277 (FGAGKVDLCS…SARIRMAGGR (230 aa)). Positions 66, 70, and 73 each coordinate [4Fe-4S] cluster. Positions 110, 142, 202, and 272 each coordinate [2Fe-2S] cluster.

Belongs to the radical SAM superfamily. Biotin synthase family. As to quaternary structure, homodimer. It depends on [4Fe-4S] cluster as a cofactor. Requires [2Fe-2S] cluster as cofactor.

The enzyme catalyses (4R,5S)-dethiobiotin + (sulfur carrier)-SH + 2 reduced [2Fe-2S]-[ferredoxin] + 2 S-adenosyl-L-methionine = (sulfur carrier)-H + biotin + 2 5'-deoxyadenosine + 2 L-methionine + 2 oxidized [2Fe-2S]-[ferredoxin]. It functions in the pathway cofactor biosynthesis; biotin biosynthesis; biotin from 7,8-diaminononanoate: step 2/2. Functionally, catalyzes the conversion of dethiobiotin (DTB) to biotin by the insertion of a sulfur atom into dethiobiotin via a radical-based mechanism. The chain is Biotin synthase from Heliobacterium modesticaldum (strain ATCC 51547 / Ice1).